The sequence spans 99 residues: Malonate decarboxylase acyl carrier protein (99 aa).

The residue at position 25 (S25) is an O-(phosphoribosyl dephospho-coenzyme A)serine.

It belongs to the MdcC family. Post-translationally, covalently binds the prosthetic group of malonate decarboxylase.

The protein resides in the cytoplasm. Subunit of malonate decarboxylase, it is an acyl carrier protein to which acetyl and malonyl thioester residues are bound via a 2'-(5''-phosphoribosyl)-3'-dephospho-CoA prosthetic group and turn over during the catalytic mechanism. The chain is Malonate decarboxylase acyl carrier protein from Pseudomonas paraeruginosa (strain DSM 24068 / PA7) (Pseudomonas aeruginosa (strain PA7)).